Here is a 366-residue protein sequence, read N- to C-terminus: Aminomethyltransferase (366 aa).

This sequence belongs to the GcvT family. As to quaternary structure, the glycine cleavage system is composed of four proteins: P, T, L and H.

It carries out the reaction N(6)-[(R)-S(8)-aminomethyldihydrolipoyl]-L-lysyl-[protein] + (6S)-5,6,7,8-tetrahydrofolate = N(6)-[(R)-dihydrolipoyl]-L-lysyl-[protein] + (6R)-5,10-methylene-5,6,7,8-tetrahydrofolate + NH4(+). Functionally, the glycine cleavage system catalyzes the degradation of glycine. This is Aminomethyltransferase from Moorella thermoacetica (strain ATCC 39073 / JCM 9320).